Reading from the N-terminus, the 218-residue chain is LexA repressor (218 aa).

Residues 31–51 (IREIQDGLRISSTSVVAYNLR) constitute a DNA-binding region (H-T-H motif). Catalysis depends on for autocatalytic cleavage activity residues Ser137 and Lys176.

This sequence belongs to the peptidase S24 family. In terms of assembly, homodimer.

It catalyses the reaction Hydrolysis of Ala-|-Gly bond in repressor LexA.. Functionally, represses a number of genes involved in the response to DNA damage (SOS response), including recA and lexA. In the presence of single-stranded DNA, RecA interacts with LexA causing an autocatalytic cleavage which disrupts the DNA-binding part of LexA, leading to derepression of the SOS regulon and eventually DNA repair. In Roseiflexus sp. (strain RS-1), this protein is LexA repressor.